The sequence spans 622 residues: Cilia- and flagella-associated protein 206 (622 aa).

The disordered stretch occupies residues 570–592 (SQVYPPKDTSTQSMREDSTGVPR).

Belongs to the CFAP206 family.

It localises to the cytoplasm. The protein localises to the cytoskeleton. The protein resides in the cilium axoneme. It is found in the cilium basal body. Functionally, essential for sperm motility and is involved in the regulation of the beating frequency of motile cilia on the epithelial cells of the respiratory tract. Required for the establishment of radial spokes in sperm flagella. This is Cilia- and flagella-associated protein 206 from Homo sapiens (Human).